Consider the following 2636-residue polypeptide: Ankyrin repeat and KH domain-containing protein CBG24701 (2636 aa).

ANK repeat units follow at residues 252–281, 286–317, 361–390, 435–464, 468–500, 505–534, 536–564, 566–595, 598–627, 632–661, and 665–695; these read SRIT…DPNA, NCNT…KVDV, NDNS…KNQQ, NLPS…RIDE, HKNT…DVNA, SGDT…DLTT, KITP…TIPQ, QLSR…DLNF, DERT…SVNF, NDAT…DPML, and DGVN…NMDL. Disordered regions lie at residues 994 to 1030, 1172 to 1191, and 1230 to 1268; these read PIDA…TTIE, KSNR…KKGK, and NNTQ…VIDK. A compositionally biased stretch (polar residues) spans 1006-1030; that stretch reads QQTGPKTTSLTTPQPDESNGATTIE. Low complexity predominate over residues 1233 to 1245; sequence QVQQQQGQQQQGQ. Basic and acidic residues predominate over residues 1249 to 1260; that stretch reads THSEGDGTERAK. ANK repeat units lie at residues 1273–1302, 1306–1335, 1340–1369, 1373–1402, 1408–1437, 1447–1476, 1480–1509, 1515–1546, 1548–1577, and 1581–1610; these read TLET…NIEH, KGFT…AIEA, TKDT…NKEH, SDYT…EINS, LGIS…DINA, YRNT…NVEH, TGLT…DPNA, TKDT…DIRN, KGCS…DTDM, and RKMS…QFPN. Residues 1638 to 1696 adopt a coiled-coil conformation; sequence RNAKKAQAETAEETANRLLQLIDDEKERDINKKQKIKDKKKQKKEAKKKFQAEQEQLSA. The disordered stretch occupies residues 1669-1857; the sequence is KKQKIKDKKK…SSISERQHSW (189 aa). The segment covering 1670 to 1686 has biased composition (basic residues); sequence KQKIKDKKKQKKEAKKK. The segment covering 1698 to 1708 has biased composition (pro residues); that stretch reads PSKPEPVVAPE. Acidic residues predominate over residues 1709–1722; the sequence is PEPEPETEPVEEPA. Residues 1811 to 1829 are compositionally biased toward basic and acidic residues; sequence DWQKAGKEGKKVRPKREGR. Positions 1832–1851 are enriched in polar residues; that stretch reads APSSAGSSQAKHRSNTSSIS. The KH domain occupies 1864 to 1929; sequence VKAYEFTVPG…DVVSMAVNII (66 aa). Disordered stretches follow at residues 1980 to 2182, 2196 to 2221, 2269 to 2292, 2301 to 2320, 2352 to 2417, 2444 to 2465, and 2539 to 2636; these read SASI…SLPS, FKPT…STAS, NSTA…SNDF, SNQK…NSQL, SQSS…TQQQ, MHRQ…NPYY, and GMMQ…SSRM. Polar residues predominate over residues 1994–2008; the sequence is SQCNRSSKSHGNQAT. Positions 2025–2045 are enriched in low complexity; sequence TPPTQTQTKQQPTPSPQVQQP. Positions 2057–2083 are enriched in polar residues; the sequence is SLAQSSVPQATENVTKPTQTPPASVQQ. Low complexity-rich tracts occupy residues 2099–2119 and 2139–2148; these read QVVQ…QRPQ and QQHMQQIQQQ. Positions 2167–2179 are enriched in pro residues; sequence PGPPVQPQTPPQS. A compositionally biased stretch (low complexity) spans 2269–2280; the sequence is NSTASSLNTATT. Polar residues predominate over residues 2281–2292; sequence KNDTSDWGSNDF. 2 stretches are compositionally biased toward low complexity: residues 2361 to 2373 and 2391 to 2417; these read QHQQ…MQDP and PQQF…TQQQ. 3 stretches are compositionally biased toward polar residues: residues 2449–2465, 2565–2574, and 2583–2595; these read NSSS…NPYY, RSASGSSQNR, and QQPQ…TQAD. Residues 2599–2615 are compositionally biased toward low complexity; sequence RLLLQQQQQQRSSQQQQ. Over residues 2616–2636 the composition is skewed to polar residues; the sequence is NPTNQGLPQKWSNTWNSSSRM.

Belongs to the mask family.

Its subcellular location is the cytoplasm. This is Ankyrin repeat and KH domain-containing protein CBG24701 from Caenorhabditis briggsae.